The chain runs to 565 residues: Efflux pump aunC (565 aa).

The span at 1–14 shows a compositional bias: polar residues; it reads MSDTARISGGSFTS. Residues 1-57 form a disordered region; the sequence is MSDTARISGGSFTSPPGRDVELNSFKEASQTRLYPYSSRKEEEGREDEQQRPEREED. Basic and acidic residues predominate over residues 38–54; the sequence is SRKEEEGREDEQQRPER. Transmembrane regions (helical) follow at residues 59–79, 103–123, 128–148, 164–184, 194–214, 222–242, 257–277, 293–313, 335–355, 378–398, 399–419, 425–445, 457–477, and 530–550; these read GALTGYKLVLVTVGLCFCIFC, DVGWYASAYLLTTCAVTLPFG, FFPIKWVYLSALFVFELGSFI, VAGLGGGGLFSGSLLIITQCV, GFIMSIFAVASVIAPLMGGAF, WCFYINLPFGLVSAVVIFFTF, AAGLDPLGTATFLPAIVCLLL, IIALFTLFGVLLACFVGLQLW, LYGFCLNGAMFTFVYYLPIWF, VIFAIISGVLVSATGYFGPFM, LLSAAMASIAAGLLSMLHPSS, IGYQVLLGSSIGMGFQLPVFV, TATALMTFIQLLGGAIFVSVA, and VHTFYLAIGLAAASFLAATVI.

The protein belongs to the major facilitator superfamily. TCR/Tet family.

Its subcellular location is the cell membrane. In terms of biological role, efflux pump; part of the gene cluster that mediates the biosynthesis of aurasperone B, a dimeric gamma-naphthopyrone. This Aspergillus niger (strain ATCC MYA-4892 / CBS 513.88 / FGSC A1513) protein is Efflux pump aunC.